We begin with the raw amino-acid sequence, 542 residues long: 1-aminocyclopropane-1-carboxylate synthase 6 (542 aa).

The interval 1 to 28 (MRRSGNGGAAKKKKKRSASAASERRPRA) is disordered. Lysine 379 is subject to N6-(pyridoxal phosphate)lysine.

This sequence belongs to the class-I pyridoxal-phosphate-dependent aminotransferase family. Pyridoxal 5'-phosphate is required as a cofactor. As to expression, expressed in leaves.

It is found in the plastid. The protein localises to the amyloplast membrane. The enzyme catalyses S-adenosyl-L-methionine = 1-aminocyclopropane-1-carboxylate + S-methyl-5'-thioadenosine + H(+). It functions in the pathway alkene biosynthesis; ethylene biosynthesis via S-adenosyl-L-methionine; ethylene from S-adenosyl-L-methionine: step 1/2. Functionally, catalyzes the formation of 1-aminocyclopropane-1-carboxylate, a direct precursor of ethylene in higher plants. Required for the regulation of starch grain size in endosperm. The polypeptide is 1-aminocyclopropane-1-carboxylate synthase 6 (Oryza sativa subsp. japonica (Rice)).